The chain runs to 338 residues: 1-aminocyclopropane-1-carboxylate deaminase (338 aa).

N6-(pyridoxal phosphate)lysine is present on Lys-51. Residue Ser-78 is the Nucleophile of the active site.

This sequence belongs to the ACC deaminase/D-cysteine desulfhydrase family. Homotrimer. Pyridoxal 5'-phosphate serves as cofactor.

The catalysed reaction is 1-aminocyclopropane-1-carboxylate + H2O = 2-oxobutanoate + NH4(+). Functionally, catalyzes a cyclopropane ring-opening reaction, the irreversible conversion of 1-aminocyclopropane-1-carboxylate (ACC) to ammonia and alpha-ketobutyrate. Allows growth on ACC as a nitrogen source. This chain is 1-aminocyclopropane-1-carboxylate deaminase, found in Ralstonia nicotianae (strain ATCC BAA-1114 / GMI1000) (Ralstonia solanacearum).